The primary structure comprises 890 residues: Protein Ycf2 (890 aa).

385–392 (GPPGTGKT) provides a ligand contact to ATP.

This sequence belongs to the Ycf2 family.

It is found in the plastid. Its subcellular location is the chloroplast stroma. Functionally, probable ATPase of unknown function. Its presence in a non-photosynthetic plant (Epifagus virginiana) and experiments in tobacco indicate that it has an essential function which is probably not related to photosynthesis. This Mesostigma viride (Green alga) protein is Protein Ycf2 (ycf2).